Consider the following 129-residue polypeptide: Small ribosomal subunit protein uS11 (129 aa).

Belongs to the universal ribosomal protein uS11 family. As to quaternary structure, part of the 30S ribosomal subunit. Interacts with proteins S7 and S18. Binds to IF-3.

Its function is as follows. Located on the platform of the 30S subunit, it bridges several disparate RNA helices of the 16S rRNA. Forms part of the Shine-Dalgarno cleft in the 70S ribosome. The protein is Small ribosomal subunit protein uS11 of Limosilactobacillus reuteri (strain DSM 20016) (Lactobacillus reuteri).